Consider the following 282-residue polypeptide: Bis(5'-nucleosyl)-tetraphosphatase, symmetrical (282 aa).

The protein belongs to the Ap4A hydrolase family.

It carries out the reaction P(1),P(4)-bis(5'-adenosyl) tetraphosphate + H2O = 2 ADP + 2 H(+). Hydrolyzes diadenosine 5',5'''-P1,P4-tetraphosphate to yield ADP. The sequence is that of Bis(5'-nucleosyl)-tetraphosphatase, symmetrical from Escherichia coli O7:K1 (strain IAI39 / ExPEC).